Consider the following 251-residue polypeptide: MAGHSKFKNIMHRKGRADAARSKLFSKLSREITVAAKTGLPDPAMNPRLRLAVNNAKAESLPKDVIERAIKKSQMGDAADYSEIRYEGVAAGGVGIIVEVLTDNKNRAAANVRSYFTKMGGNMGATGSVTFNFDRVGQISYPAKAASEDDMMEAAIEAGADDVTSDMDEEGEGHTVYTAFESLNDVAAALEAKFGAASNTKIAWRPKMQVPVTGDAVATLMKLLDMLDEDDDVQAVYSNEDISDEDLAKLG.

The protein belongs to the TACO1 family.

It localises to the cytoplasm. The chain is Probable transcriptional regulatory protein CC_3243 from Caulobacter vibrioides (strain ATCC 19089 / CIP 103742 / CB 15) (Caulobacter crescentus).